The primary structure comprises 215 residues: MKTVLLTGFDPFGGESINPAWEVAKSLHEKTIGEYKIISKQVPTVFHKSISVLKEYIEELAPEFIICIGQAGGRPDITIERVAINIDDARIADNEGNQPVDVPVVEEGPAAYWSTLPMKAIVKKLQEEGIPASVSQTAGTFVCNHLFYGLMHELEKHDTKMKGGFIHIPFLPEQASNYPGQPSMSLSTIRKGIELAVEVTTTVEVDIVEVGGTTH.

Active-site residues include Glu-80, Cys-143, and His-167.

The protein belongs to the peptidase C15 family. As to quaternary structure, homotetramer.

Its subcellular location is the cytoplasm. It carries out the reaction Release of an N-terminal pyroglutamyl group from a polypeptide, the second amino acid generally not being Pro.. Functionally, removes 5-oxoproline from various penultimate amino acid residues except L-proline. This chain is Pyrrolidone-carboxylate peptidase, found in Bacillus anthracis.